We begin with the raw amino-acid sequence, 327 residues long: Cobalamin biosynthesis protein CobD (327 aa).

A run of 4 helical transmembrane segments spans residues 63 to 83, 84 to 104, 158 to 178, and 305 to 325; these read VGIL…ARLF, DVLG…FLAQ, FSDG…PGLL, and VFYA…LPLL.

It belongs to the CobD/CbiB family.

It localises to the cell membrane. It participates in cofactor biosynthesis; adenosylcobalamin biosynthesis. In terms of biological role, converts cobyric acid to cobinamide by the addition of aminopropanol on the F carboxylic group. The polypeptide is Cobalamin biosynthesis protein CobD (Rhizobium meliloti (strain 1021) (Ensifer meliloti)).